The following is a 662-amino-acid chain: Probable quinol oxidase subunit 1 (662 aa).

2 helical membrane-spanning segments follow: residues 14 to 34 (WMIT…IAVI) and 58 to 78 (IMYL…ALLI). His-102 serves as a coordination point for Fe(II)-heme a. 8 helical membrane passes run 103 to 123 (GVIM…NIVV), 140 to 160 (VSFW…IIGG), 187 to 207 (IAIQ…FVTI), 228 to 248 (FITT…LALM), 273 to 293 (FFWV…FGIY), 311 to 331 (MVWA…HHFF), 336 to 356 (GALI…PTGV), and 376 to 396 (MLFS…GVML). The Cu cation site is built by His-279, Tyr-283, His-328, and His-329. A cross-link (1'-histidyl-3'-tyrosine (His-Tyr)) is located at residues 279-283 (HPEVY). His-414 lines the heme a3 pocket. 5 helical membrane-spanning segments follow: residues 415–435 (FHYT…IFWY), 451–471 (CFWF…ILGL), 493–513 (ISTI…VSIV), 587–604 (PVGF…FFLI), and 608–627 (VIPA…YRSF). His-416 contributes to the Fe(II)-heme a binding site.

It belongs to the heme-copper respiratory oxidase family. The cofactor is Cu cation. Requires ferriheme a as cofactor. It depends on Heme A3. as a cofactor.

The protein resides in the cell membrane. It carries out the reaction 2 a quinol + O2 = 2 a quinone + 2 H2O. It functions in the pathway energy metabolism; oxidative phosphorylation. Its function is as follows. Catalyzes quinol oxidation with the concomitant reduction of oxygen to water. This Staphylococcus aureus (strain MRSA252) protein is Probable quinol oxidase subunit 1 (qoxB).